A 122-amino-acid chain; its full sequence is Large ribosomal subunit protein uL14 (122 aa).

The protein belongs to the universal ribosomal protein uL14 family. In terms of assembly, part of the 50S ribosomal subunit. Forms a cluster with proteins L3 and L19. In the 70S ribosome, L14 and L19 interact and together make contacts with the 16S rRNA in bridges B5 and B8.

Its function is as follows. Binds to 23S rRNA. Forms part of two intersubunit bridges in the 70S ribosome. This is Large ribosomal subunit protein uL14 from Desulfosudis oleivorans (strain DSM 6200 / JCM 39069 / Hxd3) (Desulfococcus oleovorans).